The sequence spans 410 residues: Lipoyl synthase, mitochondrial (410 aa).

The [4Fe-4S] cluster site is built by Cys-125, Cys-130, Cys-136, Cys-157, Cys-161, Cys-164, and Ser-373. The region spanning Ser-140 to Leu-362 is the Radical SAM core domain.

The protein belongs to the radical SAM superfamily. Lipoyl synthase family. [4Fe-4S] cluster serves as cofactor.

It localises to the mitochondrion. It carries out the reaction [[Fe-S] cluster scaffold protein carrying a second [4Fe-4S](2+) cluster] + N(6)-octanoyl-L-lysyl-[protein] + 2 oxidized [2Fe-2S]-[ferredoxin] + 2 S-adenosyl-L-methionine + 4 H(+) = [[Fe-S] cluster scaffold protein] + N(6)-[(R)-dihydrolipoyl]-L-lysyl-[protein] + 4 Fe(3+) + 2 hydrogen sulfide + 2 5'-deoxyadenosine + 2 L-methionine + 2 reduced [2Fe-2S]-[ferredoxin]. It functions in the pathway protein modification; protein lipoylation via endogenous pathway; protein N(6)-(lipoyl)lysine from octanoyl-[acyl-carrier-protein]: step 2/2. Functionally, catalyzes the radical-mediated insertion of two sulfur atoms into the C-6 and C-8 positions of the octanoyl moiety bound to the lipoyl domains of lipoate-dependent enzymes, thereby converting the octanoylated domains into lipoylated derivatives. In Leishmania major, this protein is Lipoyl synthase, mitochondrial.